Reading from the N-terminus, the 339-residue chain is Glycerol-3-phosphate dehydrogenase [NAD(P)+] (339 aa).

NADPH is bound by residues Ser-11, Trp-12, and Lys-109. Sn-glycerol 3-phosphate contacts are provided by Lys-109, Gly-140, and Ser-142. NADPH is bound at residue Ala-144. Sn-glycerol 3-phosphate is bound by residues Lys-195, Asp-249, Ser-259, Arg-260, and Asn-261. The active-site Proton acceptor is the Lys-195. Arg-260 is a binding site for NADPH. Positions 284 and 286 each coordinate NADPH.

Belongs to the NAD-dependent glycerol-3-phosphate dehydrogenase family.

Its subcellular location is the cytoplasm. The catalysed reaction is sn-glycerol 3-phosphate + NAD(+) = dihydroxyacetone phosphate + NADH + H(+). The enzyme catalyses sn-glycerol 3-phosphate + NADP(+) = dihydroxyacetone phosphate + NADPH + H(+). It participates in membrane lipid metabolism; glycerophospholipid metabolism. Functionally, catalyzes the reduction of the glycolytic intermediate dihydroxyacetone phosphate (DHAP) to sn-glycerol 3-phosphate (G3P), the key precursor for phospholipid synthesis. This is Glycerol-3-phosphate dehydrogenase [NAD(P)+] from Lactobacillus acidophilus (strain ATCC 700396 / NCK56 / N2 / NCFM).